The chain runs to 197 residues: UPF0215 protein MK0057 (197 aa).

Belongs to the UPF0215 family.

The sequence is that of UPF0215 protein MK0057 from Methanopyrus kandleri (strain AV19 / DSM 6324 / JCM 9639 / NBRC 100938).